The primary structure comprises 201 residues: Large ribosomal subunit protein uL4 (201 aa).

Residues 44-73 form a disordered region; sequence RAQKSRAEVKASRKKPWRQKGTGRARAGSV. Residues 55 to 66 show a composition bias toward basic residues; the sequence is SRKKPWRQKGTG.

Belongs to the universal ribosomal protein uL4 family. Part of the 50S ribosomal subunit.

Its function is as follows. One of the primary rRNA binding proteins, this protein initially binds near the 5'-end of the 23S rRNA. It is important during the early stages of 50S assembly. It makes multiple contacts with different domains of the 23S rRNA in the assembled 50S subunit and ribosome. Forms part of the polypeptide exit tunnel. In Hamiltonella defensa subsp. Acyrthosiphon pisum (strain 5AT), this protein is Large ribosomal subunit protein uL4.